We begin with the raw amino-acid sequence, 1370 residues long: Major capsid protein (1370 aa).

It belongs to the herpesviridae major capsid protein family. In terms of assembly, homomultimer. Makes the hexons and eleven out of twelve pentons. Interacts with triplex proteins 1/TRX1 and 2/TRX2; adjacent capsomers are linked together in groups of three by triplexes, heterotrimeric complexes composed of one molecule of TRX1 and two molecules of TRX2. Interacts with scaffold protein; this interaction allows efficient MCP transport to the host nucleus. Interacts with capsid vertex component 2/CVC2. Interacts with the small capsomere-interacting protein/SCP.

Its subcellular location is the virion. The protein resides in the host nucleus. Functionally, self-assembles to form an icosahedral capsid with a T=16 symmetry, about 200 nm in diameter, and consisting of 150 hexons and 12 pentons (total of 162 capsomers). Hexons form the edges and faces of the capsid and are each composed of six MCP molecules. In contrast, one penton is found at each of the 12 vertices. Eleven of the pentons are MCP pentamers, while the last vertex is occupied by the portal complex. The capsid is surrounded by a layer of proteinaceous material designated the tegument which, in turn, is enclosed in an envelope of host cell-derived lipids containing virus-encoded glycoproteins. This is Major capsid protein from Human cytomegalovirus (strain AD169) (HHV-5).